Reading from the N-terminus, the 626-residue chain is Probable serine/threonine-protein kinase CCRP1 (626 aa).

The Protein kinase domain maps to 36-291 (YSKGRMLGKG…LDEILQHPFL (256 aa)). ATP is bound by residues 42–50 (LGKGGFAKC) and Lys65. Ser71 is modified (phosphoserine). Asp159 acts as the Proton acceptor in catalysis. Residues 399–433 (NFTKTGSWQSNLNGTQSVKGSSRPQTVQQKGDLKS) form a disordered region. The span at 400 to 427 (FTKTGSWQSNLNGTQSVKGSSRPQTVQQ) shows a compositional bias: polar residues. POLO box domains follow at residues 471–554 (WVKK…YLEG) and 574–626 (YVKK…PISP).

Belongs to the protein kinase superfamily. Ser/Thr protein kinase family. CDC5/Polo subfamily. In terms of tissue distribution, embryo.

It carries out the reaction L-seryl-[protein] + ATP = O-phospho-L-seryl-[protein] + ADP + H(+). The enzyme catalyses L-threonyl-[protein] + ATP = O-phospho-L-threonyl-[protein] + ADP + H(+). Functionally, may play a role in the division of some cell types. The sequence is that of Probable serine/threonine-protein kinase CCRP1 (CCRP1) from Zea mays (Maize).